The chain runs to 68 residues: Large ribosomal subunit protein uL29 (68 aa).

Belongs to the universal ribosomal protein uL29 family.

This is Large ribosomal subunit protein uL29 from Limosilactobacillus reuteri (strain DSM 20016) (Lactobacillus reuteri).